We begin with the raw amino-acid sequence, 492 residues long: G2/mitotic-specific cyclin CLB2 (492 aa).

The disordered stretch occupies residues 1–176 (MPQVTKTNNE…QPEVGERSQS (176 aa)). Residues 23–33 (QESISTIKNTT) are compositionally biased toward polar residues. The span at 34–58 (ISNSQHKQQTQQQISSPPQVSVTSS) shows a compositional bias: low complexity. The span at 59–83 (EGVSHVNTRQYLGDVSNQYITNAKP) shows a compositional bias: polar residues. Residues 111–135 (ASDNNNNGSTSSSSNSSNNNNNDAN) are compositionally biased toward low complexity. Positions 208–334 (EIFSYYYELE…MLTILNFDLN (127 aa)) constitute a Cyclin N-terminal domain.

It belongs to the cyclin family. Cyclin AB subfamily.

Its function is as follows. 2/mitotic-specific cyclin essential for the control of the cell cycle at the G2/M (mitosis) transition. G2/M cyclins accumulate steadily during G2 and are abruptly destroyed at mitosis. Degradation is necessary for the cell to exit from mitosis. Plays a role in morphogenesis by negatively regulating polarized growth. Through binding to CDC28 regulates cytokinesis, partly by phosphorylation of the actomyosin ring component IQG1. Also involved in the phosphorylation of CDC6 and CDC54. This is G2/mitotic-specific cyclin CLB2 (CLB2) from Candida albicans (strain SC5314 / ATCC MYA-2876) (Yeast).